The following is a 289-amino-acid chain: E3 ubiquitin-protein ligase MARCHF1 (289 aa).

The segment at 1 to 66 (MLGWCEAIAR…SPTTGTAPRS (66 aa)) is responsible for low stability. A disordered region spans residues 13 to 69 (HRIPNNTRTPEISGDLADASQTSTLNEKSPGRSASRSSNISKASSPTTGTAPRSQSR). Over residues 43-58 (GRSASRSSNISKASSP) the composition is skewed to low complexity. A compositionally biased stretch (polar residues) spans 59-69 (TTGTAPRSQSR). An RING-CH-type zinc finger spans residues 72-133 (VCPSTQDICR…ELCKYDFIME (62 aa)). Cys80, Cys83, Cys97, Cys99, His107, Cys110, Cys123, and Cys126 together coordinate Zn(2+). The next 2 membrane-spanning stretches (helical) occupy residues 155–175 (IFCSVTFHVIAITCVVWSLYV) and 197–217 (FWTKLVVVAIGFTGGLVFMYV). Residues 222–279 (YVQLWRRLKAYNRVIFVQNCPDTAKKLEKNFSCNVNTDIKDAVVVPVPQTGANSLPSA) form a responsible for down-regulation of CD86 and MHC class II cell surface expression region.

As to quaternary structure, interacts with CD83; this interaction antagonizes MARCHF1-mediated MHC II and CD86 down-regulation. Post-translationally, ubiquitinated via ubiquitin-conjugating enzyme E2 D1/UBE2D1 independently of lysines, leading to proteolytic degradation. Has a short half-life. Instability/short half-life permits rapid changes that allow efficient induction of antigen presentation once antigen presenting cells, APCs, receive maturation signals. Small changes in protein levels significantly alter the cell surface display of MHC class II proteins. In terms of tissue distribution, expressed in antigen presenting cells, APCs, located in lymph nodes and spleen. Also expressed in lung. Expression is high in follicular B-cells, moderate in dendritic cells and low in splenic T-cells.

The protein localises to the golgi apparatus. The protein resides in the trans-Golgi network membrane. It localises to the lysosome membrane. It is found in the cytoplasmic vesicle membrane. Its subcellular location is the late endosome membrane. The protein localises to the early endosome membrane. The protein resides in the cell membrane. It catalyses the reaction S-ubiquitinyl-[E2 ubiquitin-conjugating enzyme]-L-cysteine + [acceptor protein]-L-lysine = [E2 ubiquitin-conjugating enzyme]-L-cysteine + N(6)-ubiquitinyl-[acceptor protein]-L-lysine.. The protein operates within protein modification; protein ubiquitination. E3 ubiquitin-protein ligase that mediates ubiquitination of TFRC, CD86, FAS and MHC class II proteins, such as HLA-DR alpha and beta, and promotes their subsequent endocytosis and sorting to lysosomes via multivesicular bodies. By constitutively ubiquitinating MHC class II proteins in immature dendritic cells, down-regulates their cell surface localization thus sequestering them in the intracellular endosomal system. Also regulates insulin sensitivity by controlling surface expression of the insulin receptor subunit beta/INSR by direct ubiquitination and degradation. Functionally, (Microbial infection) Plays a role in iron metabolism by regulating the levels of the transferrin receptor TFRC during human cytomegalovirus infection, subsequently contributing to a proviral effect. This chain is E3 ubiquitin-protein ligase MARCHF1, found in Homo sapiens (Human).